Here is a 323-residue protein sequence, read N- to C-terminus: tRNA dimethylallyltransferase (323 aa).

12-19 contacts ATP; that stretch reads GPTAAGKT. 14–19 provides a ligand contact to substrate; that stretch reads TAAGKT. 2 interaction with substrate tRNA regions span residues 37–40 and 161–165; these read DSAL and QRLIR.

Belongs to the IPP transferase family. Monomer. Mg(2+) serves as cofactor.

It catalyses the reaction adenosine(37) in tRNA + dimethylallyl diphosphate = N(6)-dimethylallyladenosine(37) in tRNA + diphosphate. In terms of biological role, catalyzes the transfer of a dimethylallyl group onto the adenine at position 37 in tRNAs that read codons beginning with uridine, leading to the formation of N6-(dimethylallyl)adenosine (i(6)A). The polypeptide is tRNA dimethylallyltransferase (Pseudomonas putida (strain GB-1)).